The following is a 390-amino-acid chain: Zinc transporter 8 (390 aa).

Positions 1–25 (MRTNTTATVLLAAAVALLLATAARG) are cleaved as a signal peptide. Residue Asn4 is glycosylated (N-linked (GlcNAc...) asparagine). At 26–50 (DGGDGGCGKEDAAAGRDRARARGLK) the chain is on the extracellular side. Residues 51–71 (IAAFFSILVCGALGCGLPSLG) form a helical membrane-spanning segment. Residues 72–82 (RHVPALRPDGD) are Cytoplasmic-facing. Residues 83–103 (VFFLVKAFAAGVILATGFIHI) form a helical membrane-spanning segment. At 104 to 124 (LPDAFDNLTDDCLPAGGPWKE) the chain is on the extracellular side. Asn110 carries an N-linked (GlcNAc...) asparagine glycan. Residues 125–145 (FPFAGFGAMVGAIGTLVVDTL) traverse the membrane as a helical segment. The Cytoplasmic segment spans residues 146 to 235 (ATGYFTRALS…DDKETTLRHR (90 aa)). The tract at residues 165–199 (VADEEKQSAAATQQHNHHHNHHVVGDGGGGGEEHE) is disordered. Residues 236 to 256 (VISQVLELGIVVHSVIIGISL) form a helical membrane-spanning segment. Residues 257–267 (GASQNPETIKP) lie on the Extracellular side of the membrane. A helical membrane pass occupies residues 268–288 (LVVALSFHQMFEGMGLGGCIV). At 289–296 (QAKFKVRS) the chain is on the cytoplasmic side. A helical transmembrane segment spans residues 297–317 (IVTMVLFFCLTTPVGIAVGVG). The Extracellular segment spans residues 318–329 (ISSVYNESSPTA). The N-linked (GlcNAc...) asparagine glycan is linked to Asn323. The chain crosses the membrane as a helical span at residues 330-350 (LVVEGILNSVAAGILIYMALV). The Cytoplasmic segment spans residues 351 to 369 (DLLAEDFMNPRVQSKGKLQ). Residues 370 to 390 (LGINLAMLAGAGLMSMLAKWA) traverse the membrane as a helical segment.

Belongs to the ZIP transporter (TC 2.A.5) family.

It localises to the cell membrane. Its function is as follows. Zinc transporter that may mediate zinc uptake from the rhizosphere and may be responsible for the translocation of zinc within the plant. This is Zinc transporter 8 (ZIP8) from Oryza sativa subsp. japonica (Rice).